The primary structure comprises 144 residues: Small ribosomal subunit protein uS11c (144 aa).

Belongs to the universal ribosomal protein uS11 family. As to quaternary structure, part of the 30S ribosomal subunit.

It is found in the plastid. The protein resides in the chloroplast. This is Small ribosomal subunit protein uS11c from Oenothera biennis (German evening primrose).